Reading from the N-terminus, the 433-residue chain is 3-phosphoshikimate 1-carboxyvinyltransferase (433 aa).

3 residues coordinate 3-phosphoshikimate: Lys15, Ser16, and Arg20. Lys15 serves as a coordination point for phosphoenolpyruvate. Residues Gly96 and Arg124 each coordinate phosphoenolpyruvate. 5 residues coordinate 3-phosphoshikimate: Ser169, Gln171, Ser195, Asp318, and Lys345. Gln171 serves as a coordination point for phosphoenolpyruvate. Asp318 (proton acceptor) is an active-site residue. Phosphoenolpyruvate is bound by residues Arg349 and Arg393.

The protein belongs to the EPSP synthase family. In terms of assembly, monomer.

The protein localises to the cytoplasm. It catalyses the reaction 3-phosphoshikimate + phosphoenolpyruvate = 5-O-(1-carboxyvinyl)-3-phosphoshikimate + phosphate. It functions in the pathway metabolic intermediate biosynthesis; chorismate biosynthesis; chorismate from D-erythrose 4-phosphate and phosphoenolpyruvate: step 6/7. Functionally, catalyzes the transfer of the enolpyruvyl moiety of phosphoenolpyruvate (PEP) to the 5-hydroxyl of shikimate-3-phosphate (S3P) to produce enolpyruvyl shikimate-3-phosphate and inorganic phosphate. In Chlorobium luteolum (strain DSM 273 / BCRC 81028 / 2530) (Pelodictyon luteolum), this protein is 3-phosphoshikimate 1-carboxyvinyltransferase.